The primary structure comprises 853 residues: DNA mismatch repair protein MutS (853 aa).

614 to 621 is a binding site for ATP; the sequence is GPNMGGKS.

Belongs to the DNA mismatch repair MutS family.

Its function is as follows. This protein is involved in the repair of mismatches in DNA. It is possible that it carries out the mismatch recognition step. This protein has a weak ATPase activity. The sequence is that of DNA mismatch repair protein MutS from Escherichia coli O1:K1 / APEC.